We begin with the raw amino-acid sequence, 477 residues long: ETS translocation variant 1 (477 aa).

Residue S94 is modified to Phosphoserine. The tract at residues 128–179 (PQVGMRPSNPPTPSSTPVSPLHHASPNSTHTPKPDRAFPAHLPPSQSIPDSS) is disordered. S191 and S216 each carry phosphoserine; by RPS6KA1 and RPS6KA5. K317 is covalently cross-linked (Glycyl lysine isopeptide (Lys-Gly) (interchain with G-Cter in SUMO2)). The segment at residues 335 to 415 (LQLWQFLVAL…AGERYVYKFV (81 aa)) is a DNA-binding region (ETS).

Belongs to the ETS family. Post-translationally, sumoylated. Phosphorylated at Ser-191 and Ser-216 by RPS6KA1 and RPS6KA5; phosphorylation activates transcriptional activity. Very highly expressed in brain, highly expressed in testis, lung and heart, moderately in spleen, small intestine, pancreas and colon, weakly in liver, prostate and thymus, very weakly in skeletal muscle, kidney and ovary and not in placenta and peripheral blood leukocytes.

The protein resides in the nucleus. Its function is as follows. Transcriptional activator that binds to DNA sequences containing the consensus pentanucleotide 5'-CGGA[AT]-3'. Required for olfactory dopaminergic neuron differentiation; may directly activate expression of tyrosine hydroxylase (TH). This chain is ETS translocation variant 1, found in Homo sapiens (Human).